Here is a 464-residue protein sequence, read N- to C-terminus: ATP synthase subunit beta (464 aa).

153-160 is an ATP binding site; sequence GGAGVGKT.

This sequence belongs to the ATPase alpha/beta chains family. As to quaternary structure, F-type ATPases have 2 components, CF(1) - the catalytic core - and CF(0) - the membrane proton channel. CF(1) has five subunits: alpha(3), beta(3), gamma(1), delta(1), epsilon(1). CF(0) has three main subunits: a(1), b(2) and c(9-12). The alpha and beta chains form an alternating ring which encloses part of the gamma chain. CF(1) is attached to CF(0) by a central stalk formed by the gamma and epsilon chains, while a peripheral stalk is formed by the delta and b chains.

It is found in the cell membrane. The catalysed reaction is ATP + H2O + 4 H(+)(in) = ADP + phosphate + 5 H(+)(out). Functionally, produces ATP from ADP in the presence of a proton gradient across the membrane. The catalytic sites are hosted primarily by the beta subunits. The sequence is that of ATP synthase subunit beta from Acetivibrio thermocellus (strain ATCC 27405 / DSM 1237 / JCM 9322 / NBRC 103400 / NCIMB 10682 / NRRL B-4536 / VPI 7372) (Clostridium thermocellum).